Here is a 399-residue protein sequence, read N- to C-terminus: Tetracycline resistance protein, class A (399 aa).

12 helical membrane-spanning segments follow: residues 7–29 (LIVI…PVLP), 44–66 (HYGI…LGAL), 73–95 (RPVL…TAPF), 99–121 (LYIG…AYIA), 133–155 (FGFM…GLMG), 160–182 (HAPF…FLLP), 203–225 (FRWA…MQLV), 245–267 (ATTI…AMIT), 279–298 (ALML…AFAT), 302–324 (MAFP…QAML), 336–358 (LQGS…FTAI), and 368–390 (GWAW…RGLW).

This sequence belongs to the major facilitator superfamily. TCR/Tet family.

It localises to the cell inner membrane. Its function is as follows. Resistance to tetracycline by an active tetracycline efflux. This is an energy-dependent process that decreases the accumulation of the antibiotic in whole cells. This protein functions as a metal-tetracycline/H(+) antiporter. The chain is Tetracycline resistance protein, class A (tetA) from Escherichia coli.